The following is a 277-amino-acid chain: Undecaprenyl-diphosphatase (277 aa).

6 helical membrane passes run 44–64 (RAMA…VWEF), 86–106 (GNLL…ADLI), 110–130 (LFNP…MLWA), 184–204 (AATE…AVYS), 215–235 (GDLP…MIAV), and 250–270 (FAWY…FGWV).

It belongs to the UppP family.

It is found in the cell inner membrane. It carries out the reaction di-trans,octa-cis-undecaprenyl diphosphate + H2O = di-trans,octa-cis-undecaprenyl phosphate + phosphate + H(+). Functionally, catalyzes the dephosphorylation of undecaprenyl diphosphate (UPP). Confers resistance to bacitracin. The polypeptide is Undecaprenyl-diphosphatase (Pseudomonas putida (strain ATCC 47054 / DSM 6125 / CFBP 8728 / NCIMB 11950 / KT2440)).